A 441-amino-acid polypeptide reads, in one-letter code: N-acetyl-S-(2-succino)cysteine monooxygenase (441 aa).

Positions 59, 96, 146, 150, 220, and 221 each coordinate FMN.

This sequence belongs to the NtaA/SnaA/DszA monooxygenase family. In terms of assembly, homodimer. The cofactor is FMN.

It catalyses the reaction N-acetyl-S-(2-succino)-L-cysteine + NADH + O2 + H(+) = N-acetyl-L-cysteine + oxaloacetate + NAD(+) + H2O. Its pathway is amino-acid biosynthesis; L-cysteine biosynthesis. Its function is as follows. Catalyzes the oxidative cleavage of the C-S bond of N-acetyl-S-(2-succino)cysteine, forming oxaloacetate and N-acetylcysteine (NAC). Is involved in a S-(2-succino)cysteine (2SC) degradation pathway that allows B.subtilis to grow on 2SC as a sole sulfur source, via its metabolization to cysteine. Shows almost no activity on S-succinylglutathione and 2SC. In Bacillus subtilis (strain 168), this protein is N-acetyl-S-(2-succino)cysteine monooxygenase.